Reading from the N-terminus, the 190-residue chain is UPF0301 protein Pfl01_5311 (190 aa).

The protein belongs to the UPF0301 (AlgH) family.

The protein is UPF0301 protein Pfl01_5311 of Pseudomonas fluorescens (strain Pf0-1).